A 280-amino-acid polypeptide reads, in one-letter code: MDVGAKEEEMGQVWWGHRAWSLLSAVRARAPLVQCITNLVSMDIAANVLLAAGASPAMVHSLREVPDFTPRCDAVYVNVGTLSEDWLPSMRAAASAGRPWVLDPVAAAASGFRMKACLELLSLCPAVVRGNASEILALASRSTAASSNFKGVDSSHCSVDAIEAAKALALSSSAVVAVSGAVDFVTDGKQVISVSNGVPMMQKITATGCAVTALIAAFVAMEPSDAIVAAACALAIFGLVGEIGMESAKGPASLRMHLIDALYCLNEETVTSRVRISLRP.

A substrate-binding site is contributed by M58. R129 provides a ligand contact to ATP. A206 provides a ligand contact to substrate.

This sequence belongs to the Thz kinase family. Mg(2+) is required as a cofactor.

The catalysed reaction is 5-(2-hydroxyethyl)-4-methylthiazole + ATP = 4-methyl-5-(2-phosphooxyethyl)-thiazole + ADP + H(+). Its pathway is cofactor biosynthesis; thiamine diphosphate biosynthesis; 4-methyl-5-(2-phosphoethyl)-thiazole from 5-(2-hydroxyethyl)-4-methylthiazole: step 1/1. Its function is as follows. Thiazole kinase involved in thiamine salvage pathway. The chain is Hydroxyethylthiazole kinase (THIM) from Zea mays (Maize).